A 204-amino-acid polypeptide reads, in one-letter code: Glutathione S-transferase GST-4.5 (204 aa).

Positions 1–77 (MKLYTKPGAC…YIADTAPLTG (77 aa)) constitute a GST N-terminal domain. Residues cysteine 10, valine 49, 61-62 (QN), and histidine 102 each bind glutathione. In terms of domain architecture, GST C-terminal spans 83 to 204 (TARSRAEINR…QAALQAEGLN (122 aa)).

Belongs to the GST superfamily. Homodimer.

It localises to the cytoplasm. It catalyses the reaction RX + glutathione = an S-substituted glutathione + a halide anion + H(+). Its function is as follows. Conjugation of reduced glutathione to a wide number of exogenous and endogenous hydrophobic electrophiles. This is Glutathione S-transferase GST-4.5 (gst) from Xanthomonas campestris pv. campestris (strain ATCC 33913 / DSM 3586 / NCPPB 528 / LMG 568 / P 25).